Reading from the N-terminus, the 493-residue chain is MAAFKDACFHYRRITKLNRELLRIGANSSWTPAPPSNIRGWCLECCQLTNLTYCYGCSLHHVCQWCVQYGRCFLDDEPHLLRLRTVKSPITTEKLASIVKMYQLLFPINHSIVKKFVKSTKQHKCRNDFELSWYNQLVLPITLTAAAVHCDDCIYYIFGHYEGKANQSNLPYRFVNCVDEYDRLLLDDVNFDRMAFLPGRLQKYYAKRYFIASRIPSAQPAKLTYSDFSVKTLINSGAYARRRIIYRSVTNFHWQSHEDPLNDLLLDKDKILAALMTNERRPFLTHNLNFTSLLHELSELVHHAKPCYLHSFHVQPASKVHCHSCSVAFDFHTVDWRIRRIYDDVMYFLRACCRSNVSSGSCSSLDPMDAVVKAALLEMFTESFKHHAHLLFHCFDPVQIDDVSYILFNYPVNYDIYDFIIRTLATERLPFTLSYKQFTTILFALVERWYDLSQIERLPLSIAPTNRLIELQERGNLAEEFDLLLSSSDSEED.

An RNA-binding region spans residues 1-81; that stretch reads MAAFKDACFH…CFLDDEPHLL (81 aa). Positions 42–79 are zinc-binding domain; the sequence is CLECCQLTNLTYCYGCSLHHVCQWCVQYGRCFLDDEPH. An important for cytoskeleton localization region spans residues 82-176; the sequence is RLRTVKSPIT…QSNLPYRFVN (95 aa). Residues 319-493 form an interaction with host IRF3 region; sequence KVHCHSCSVA…LLSSSDSEED (175 aa). Positions 483–486 match the pLxIS motif motif; that stretch reads LLLS.

The protein belongs to the rotavirus NSP1 family. In terms of assembly, interacts (via C-terminus) with host IRF3; this interaction leads to IRF3 degradation. Interacts with host IRF7; this interaction leads to IRF7 degradation. Interacts with host CUL1 and CUL3.

Its subcellular location is the host cytoplasm. The protein resides in the host cytoskeleton. Plays a role in the inhibition of host innate immunity by inducing the degradation of key host factors required to activate interferon production such as IRF3, IRF5 or IRF7. Associates with components of cullin RING ligases (CRLs) including CUL1 or CUL3, which are essential multisubunit ubiquitination complexes, to modulate their activities. The sequence is that of Non-structural protein 1 from Rotavirus A (isolate RVA/Mouse/Brazil/EHP/1981/G16P[20]) (RV-A).